The sequence spans 274 residues: Serine protease 28 (274 aa).

Residues 1–26 (MFRLLLLALSCLESTVFMASVSISRS) form the signal peptide. In terms of domain architecture, Peptidase S1 spans 31–274 (IVGGQRTPPG…SLAWIHQHIQ (244 aa)). Residues cysteine 62 and cysteine 78 are joined by a disulfide bond. Histidine 77 functions as the Charge relay system in the catalytic mechanism. An N-linked (GlcNAc...) asparagine glycan is attached at asparagine 106. The active-site Charge relay system is the aspartate 124. 3 cysteine pairs are disulfide-bonded: cysteine 158–cysteine 233, cysteine 191–cysteine 214, and cysteine 223–cysteine 251. The active-site Charge relay system is the serine 227.

Belongs to the peptidase S1 family. As to quaternary structure, homooligomer, heterodimer and heterotetramer. Able to form homo- and hetero- tetrameric structures. Heterotetramer is far more stable than the homotetramer. In terms of tissue distribution, expressed in embryos throughout the preimplantation period, during blastocyst hatching and embryo outgrowth. Found in uterus especially in glandular epithelium.

It is found in the secreted. With respect to regulation, inhibited by benzamidine, (4-amidino-phenyl)-methane-sulfonyl (APMSF), N-p-tosyl-L-lysine chloromethylketone (TLCK), gabexate, mesylate, BABIM and trypsin soybean inhibitor (TSI). In terms of biological role, involved in embryo hatching and implantation. This Mus musculus (Mouse) protein is Serine protease 28 (Prss28).